The sequence spans 296 residues: L-isoleucine 3(1)-dioxygenase (296 aa).

Residues His-176, Asp-178, and His-267 each coordinate Fe cation.

This sequence belongs to the iron/ascorbate-dependent oxidoreductase family. L-ascorbate serves as cofactor. Fe(2+) is required as a cofactor.

It catalyses the reaction L-isoleucine + 2-oxoglutarate + O2 = 3(1)-hydroxy-L-isoleucine + succinate + CO2. In terms of biological role, catalyzes the hydroxylation of L-isoleucine at the C-4' position to form L-4'-hydroxyisoleucine (4'-HIL). Exhibits low activity with L-valine and L-methionine. This chain is L-isoleucine 3(1)-dioxygenase, found in Pantoea ananatis (strain AJ13355).